The primary structure comprises 309 residues: Homoserine O-succinyltransferase (309 aa).

The active-site Acyl-thioester intermediate is the Cys-142. The substrate site is built by Lys-163 and Ser-192. The active-site Proton acceptor is the His-235. Residue Glu-237 is part of the active site. Substrate is bound at residue Arg-249.

The protein belongs to the MetA family. Homodimer.

The protein resides in the cytoplasm. It carries out the reaction L-homoserine + succinyl-CoA = O-succinyl-L-homoserine + CoA. The protein operates within amino-acid biosynthesis; L-methionine biosynthesis via de novo pathway; O-succinyl-L-homoserine from L-homoserine: step 1/1. Transfers a succinyl group from succinyl-CoA to L-homoserine, forming succinyl-L-homoserine. In Salmonella choleraesuis (strain SC-B67), this protein is Homoserine O-succinyltransferase.